Here is a 579-residue protein sequence, read N- to C-terminus: Suppressor of cytokine signaling 7 (579 aa).

Disordered stretches follow at residues 1–25 (MVFR…GPSE), 89–270 (PPPP…RTQS), and 295–315 (QRGL…RSLS). 3 stretches are compositionally biased toward pro residues: residues 89 to 99 (PPPPQPPPPAA), 155 to 165 (PPGPELPPVPF), and 185 to 196 (QPPPPPPPPGPL). The tract at residues 124–492 (AESLETNSCS…GKFLYFLRSR (369 aa)) is mediates interaction with SORBS3. The span at 206–217 (GSFKIRLSRLFR) shows a compositional bias: basic residues. Residues 301 to 311 (PHPPTPPPPPR) are compositionally biased toward pro residues. The SH2 domain occupies 398 to 507 (WYWGPMNWED…PTPVQLLYPV (110 aa)). An SOCS box domain is found at 502–552 (QLLYPVSRFSNVKSLQHLCRFRIRQLVRIDHIPDLPLPKPLISYIRKFYYY).

As to quaternary structure, substrate-recognition component of the ECS(SOCS7) complex, composed of SOCS7, CUL5, ELOB, ELOC and RNF7/RBX2. Interacts, via the third proline-rich region, with the second SH3 domain of the adapter protein NCK1. Also interacts with GRB2, INSR, PLCG1, SORBS3/vinexin, and phosphorylated STAT3 and STAT5. Interacts with SEPT6. Interacts with phosphorylated IRS4 and PIK3R1. In terms of tissue distribution, widely expressed with higher expression in brain and testis where it is expressed by spermatocytes and early spermatids. Also significantly expressed in spleen, skeletal muscle and kidney.

The protein resides in the cytoplasm. It is found in the nucleus. The protein localises to the cell membrane. It participates in protein modification; protein ubiquitination. Functionally, substrate-recognition component of a cullin-5-RING E3 ubiquitin-protein ligase complex (ECS complex, also named CRL5 complex), which mediates the ubiquitination and subsequent proteasomal degradation of target proteins, such as DAB1 and IRS1. Specifically recognizes and binds phosphorylated proteins via its SH2 domain, promoting their ubiquitination. The ECS(SOCS7) complex acts as a key regulator of reelin signaling by mediating ubiquitination and degradation of phosphorylated DAB1 in the cortical plate of the developing cerebral cortex, thereby regulating neuron positioning during cortex development. Functions in insulin signaling and glucose homeostasis through IRS1 ubiquitination and subsequent proteasomal degradation. Also inhibits prolactin, growth hormone and leptin signaling by preventing STAT3 and STAT5 activation, sequestering them in the cytoplasm and reducing their binding to DNA. In Mus musculus (Mouse), this protein is Suppressor of cytokine signaling 7.